A 129-amino-acid polypeptide reads, in one-letter code: Small ribosomal subunit protein uS11 (129 aa).

Belongs to the universal ribosomal protein uS11 family. Part of the 30S ribosomal subunit. Interacts with proteins S7 and S18. Binds to IF-3.

Functionally, located on the platform of the 30S subunit, it bridges several disparate RNA helices of the 16S rRNA. Forms part of the Shine-Dalgarno cleft in the 70S ribosome. This Roseobacter denitrificans (strain ATCC 33942 / OCh 114) (Erythrobacter sp. (strain OCh 114)) protein is Small ribosomal subunit protein uS11.